Consider the following 276-residue polypeptide: Dermonecrotic toxin LvSicTox-alphaII1 (276 aa).

The active site involves His5. Mg(2+) is bound by residues Glu25 and Asp27. His41 (nucleophile) is an active-site residue. Cystine bridges form between Cys45–Cys51 and Cys47–Cys193. Residue Asp85 coordinates Mg(2+).

It belongs to the arthropod phospholipase D family. Class II subfamily. Requires Mg(2+) as cofactor. Expressed by the venom gland.

It is found in the secreted. The catalysed reaction is an N-(acyl)-sphingosylphosphocholine = an N-(acyl)-sphingosyl-1,3-cyclic phosphate + choline. The enzyme catalyses an N-(acyl)-sphingosylphosphoethanolamine = an N-(acyl)-sphingosyl-1,3-cyclic phosphate + ethanolamine. It carries out the reaction a 1-acyl-sn-glycero-3-phosphocholine = a 1-acyl-sn-glycero-2,3-cyclic phosphate + choline. It catalyses the reaction a 1-acyl-sn-glycero-3-phosphoethanolamine = a 1-acyl-sn-glycero-2,3-cyclic phosphate + ethanolamine. Its function is as follows. Dermonecrotic toxins cleave the phosphodiester linkage between the phosphate and headgroup of certain phospholipids (sphingolipid and lysolipid substrates), forming an alcohol (often choline) and a cyclic phosphate. This toxin acts on sphingomyelin (SM). It may also act on ceramide phosphoethanolamine (CPE), lysophosphatidylcholine (LPC) and lysophosphatidylethanolamine (LPE), but not on lysophosphatidylserine (LPS), and lysophosphatidylglycerol (LPG). It acts by transphosphatidylation, releasing exclusively cyclic phosphate products as second products. Induces dermonecrosis, hemolysis, increased vascular permeability, edema, inflammatory response, and platelet aggregation. The sequence is that of Dermonecrotic toxin LvSicTox-alphaII1 from Loxosceles variegata (Recluse spider).